The primary structure comprises 314 residues: Lipoyl synthase (314 aa).

[4Fe-4S] cluster is bound by residues Cys-55, Cys-60, Cys-66, Cys-81, Cys-85, Cys-88, and Ser-292. Positions 67–281 constitute a Radical SAM core domain; sequence WEDREATFLI…TQYAEGLGFS (215 aa).

It belongs to the radical SAM superfamily. Lipoyl synthase family. Requires [4Fe-4S] cluster as cofactor.

Its subcellular location is the cytoplasm. The enzyme catalyses [[Fe-S] cluster scaffold protein carrying a second [4Fe-4S](2+) cluster] + N(6)-octanoyl-L-lysyl-[protein] + 2 oxidized [2Fe-2S]-[ferredoxin] + 2 S-adenosyl-L-methionine + 4 H(+) = [[Fe-S] cluster scaffold protein] + N(6)-[(R)-dihydrolipoyl]-L-lysyl-[protein] + 4 Fe(3+) + 2 hydrogen sulfide + 2 5'-deoxyadenosine + 2 L-methionine + 2 reduced [2Fe-2S]-[ferredoxin]. The protein operates within protein modification; protein lipoylation via endogenous pathway; protein N(6)-(lipoyl)lysine from octanoyl-[acyl-carrier-protein]: step 2/2. Functionally, catalyzes the radical-mediated insertion of two sulfur atoms into the C-6 and C-8 positions of the octanoyl moiety bound to the lipoyl domains of lipoate-dependent enzymes, thereby converting the octanoylated domains into lipoylated derivatives. The sequence is that of Lipoyl synthase from Mycobacterium leprae (strain Br4923).